The primary structure comprises 346 residues: 4-hydroxy-2-oxovalerate aldolase (346 aa).

The Pyruvate carboxyltransferase domain maps to 8–260; it reads VTLHDMSLRD…ETGIDLYKIM (253 aa). A substrate-binding site is contributed by 16 to 17; it reads RD. Mn(2+) is bound at residue D17. H20 functions as the Proton acceptor in the catalytic mechanism. S170 and H199 together coordinate substrate. Residues H199 and H201 each coordinate Mn(2+). Y290 is a substrate binding site.

It belongs to the 4-hydroxy-2-oxovalerate aldolase family.

It carries out the reaction (S)-4-hydroxy-2-oxopentanoate = acetaldehyde + pyruvate. This chain is 4-hydroxy-2-oxovalerate aldolase (nahM), found in Stutzerimonas stutzeri (Pseudomonas stutzeri).